Consider the following 210-residue polypeptide: N-(5'-phosphoribosyl)anthranilate isomerase (210 aa).

It belongs to the TrpF family.

The catalysed reaction is N-(5-phospho-beta-D-ribosyl)anthranilate = 1-(2-carboxyphenylamino)-1-deoxy-D-ribulose 5-phosphate. It participates in amino-acid biosynthesis; L-tryptophan biosynthesis; L-tryptophan from chorismate: step 3/5. The chain is N-(5'-phosphoribosyl)anthranilate isomerase (TRP1) from Eremothecium gossypii (strain ATCC 10895 / CBS 109.51 / FGSC 9923 / NRRL Y-1056) (Yeast).